Consider the following 230-residue polypeptide: Ribonuclease HII (230 aa).

An RNase H type-2 domain is found at 28–217 (FRIAGIDEAG…VKEHLPSQPD (190 aa)). Positions 34, 35, and 126 each coordinate a divalent metal cation. The interval 209-230 (KEHLPSQPDSDTAGPSTGLFSF) is disordered. Polar residues predominate over residues 215–230 (QPDSDTAGPSTGLFSF).

It belongs to the RNase HII family. Requires Mn(2+) as cofactor. The cofactor is Mg(2+).

The protein resides in the cytoplasm. The enzyme catalyses Endonucleolytic cleavage to 5'-phosphomonoester.. Its function is as follows. Endonuclease that specifically degrades the RNA of RNA-DNA hybrids. In Citrifermentans bemidjiense (strain ATCC BAA-1014 / DSM 16622 / JCM 12645 / Bem) (Geobacter bemidjiensis), this protein is Ribonuclease HII.